Here is a 126-residue protein sequence, read N- to C-terminus: Protein ApaG (126 aa).

The ApaG domain occupies Ser2 to Gln126.

The chain is Protein ApaG from Shewanella frigidimarina (strain NCIMB 400).